The chain runs to 68 residues: DNA-directed RNA polymerase subunit omega (68 aa).

Belongs to the RNA polymerase subunit omega family. The RNAP catalytic core consists of 2 alpha, 1 beta, 1 beta' and 1 omega subunit. When a sigma factor is associated with the core the holoenzyme is formed, which can initiate transcription.

The catalysed reaction is RNA(n) + a ribonucleoside 5'-triphosphate = RNA(n+1) + diphosphate. Functionally, promotes RNA polymerase assembly. Latches the N- and C-terminal regions of the beta' subunit thereby facilitating its interaction with the beta and alpha subunits. The protein is DNA-directed RNA polymerase subunit omega of Ruminiclostridium cellulolyticum (strain ATCC 35319 / DSM 5812 / JCM 6584 / H10) (Clostridium cellulolyticum).